A 197-amino-acid polypeptide reads, in one-letter code: CASP-like protein 0U1 (197 aa).

The Cytoplasmic portion of the chain corresponds to 1 to 13 (MDDFDPTVTNSPK). Residues 14–34 (FRLIAVQCLFSITAFAAMLSQ) traverse the membrane as a helical segment. Residues 35 to 63 (RHGLAGPDEMTLEECGPQACGYQKFSNFK) lie on the Extracellular side of the membrane. Residues 64–84 (FLIAVCIIYAVFSLVVMAAYL) traverse the membrane as a helical segment. At 85-99 (LQRVPPPVTELTAYT) the chain is on the cytoplasmic side. Residues 100–120 (VMNVLLFAAFAMSATSCNITI) traverse the membrane as a helical segment. At 121-135 (VDPVYPVCKRATSAK) the chain is on the extracellular side. Residues 136 to 156 (ASIAFAFFTWLAVCFSMLFTY) traverse the membrane as a helical segment. Residues 157-197 (KEWRDVDYHVPGSGAYEFVPGVTSGSSRSSYPPQASSSSYA) are Cytoplasmic-facing. Residues 178-197 (VTSGSSRSSYPPQASSSSYA) are disordered. Positions 180-197 (SGSSRSSYPPQASSSSYA) are enriched in low complexity.

The protein belongs to the Casparian strip membrane proteins (CASP) family. In terms of assembly, homodimer and heterodimers.

The protein resides in the cell membrane. The sequence is that of CASP-like protein 0U1 from Micromonas commoda (strain RCC299 / NOUM17 / CCMP2709) (Picoplanktonic green alga).